The chain runs to 473 residues: Ribulose bisphosphate carboxylase large chain (473 aa).

Residues 1–136 form a necessary and sufficient to target proteins to carboxysomes, interacts with shell proteins region; the sequence is MAVKKYSAGV…RLEDVRFPLA (136 aa). Asn-116 and Thr-166 together coordinate substrate. Catalysis depends on Lys-168, which acts as the Proton acceptor. Lys-170 provides a ligand contact to substrate. Residues Lys-194, Asp-196, and Glu-197 each coordinate Mg(2+). At Lys-194 the chain carries N6-carboxylysine. His-287 serves as the catalytic Proton acceptor. Residues Arg-288, His-320, and Ser-372 each contribute to the substrate site.

It belongs to the RuBisCO large chain family. Type I subfamily. In terms of assembly, heterohexadecamer of 8 large chains and 8 small chains. Forms a CsoS2-CsoS1-RuBisCO complex. The N-terminus (residues 1-136) interacts with shell proteins CsoS1A, CsoS1B and CsoS1C. Holo-RuBisCO interacts with the N-terminal repeats of CsoS2; binding is sensitive to ionic strength. A fusion of a single N-terminal repeat to the C-terminus of the large subunit of RuBisCO (cbbL) shows the repeat can lie between a CbbL dimer, making minor contacts to CbbS; thus each RuBisCO holoenzyme could bind 8 repeats. Mg(2+) is required as a cofactor.

It is found in the carboxysome. It carries out the reaction 2 (2R)-3-phosphoglycerate + 2 H(+) = D-ribulose 1,5-bisphosphate + CO2 + H2O. It catalyses the reaction D-ribulose 1,5-bisphosphate + O2 = 2-phosphoglycolate + (2R)-3-phosphoglycerate + 2 H(+). RuBisCO catalyzes two reactions: the carboxylation of D-ribulose 1,5-bisphosphate, the primary event in carbon dioxide fixation, as well as the oxidative fragmentation of the pentose substrate. Both reactions occur simultaneously and in competition at the same active site. There are estimated to be 270 RuBisCO heterohexadecamers per carboxysome. In terms of biological role, alpha-carboxysomes are able to assemble in the absence of RuBisCO, unlike beta-carboxysomes. The RuBisCO large subunit is required for enzyme integration into carboxysomes; replacing it with the carboxysomally targeted gene (Tcr_0838, AC Q31HD9) of H.crungenus places RuBisCO in the carboxysome, while the non-carboxysomal large subunit of H.crungenus (Tcr_0427, AC Q31IK0) is not incorporated in the carboxysome. This Halothiobacillus neapolitanus (strain ATCC 23641 / c2) (Thiobacillus neapolitanus) protein is Ribulose bisphosphate carboxylase large chain.